A 310-amino-acid chain; its full sequence is Malate dehydrogenase (310 aa).

Residues 7–13 (GAAGGIG) and Asp34 contribute to the NAD(+) site. Residues Arg81 and Arg87 each contribute to the substrate site. Residues Asn94 and 117–119 (ITN) each bind NAD(+). Substrate is bound by residues Asn119 and Arg153. The active-site Proton acceptor is the His177. Met227 lines the NAD(+) pocket.

This sequence belongs to the LDH/MDH superfamily. MDH type 1 family. In terms of assembly, homodimer.

It catalyses the reaction (S)-malate + NAD(+) = oxaloacetate + NADH + H(+). Functionally, catalyzes the reversible oxidation of malate to oxaloacetate. The protein is Malate dehydrogenase of Vibrio vulnificus (strain YJ016).